The primary structure comprises 500 residues: Trans-cinnamate 4-monooxygenase (500 aa).

Residues 3–23 (ALLVEKVLLGLFVAAVLALVV) traverse the membrane as a helical segment. Residues 213 to 218 (RSRLSQ) and alanine 302 each bind (E)-cinnamate. Cysteine 442 is a heme binding site.

The protein belongs to the cytochrome P450 family. Heme serves as cofactor. In terms of tissue distribution, expressed in roots and leaves.

The protein localises to the membrane. The catalysed reaction is (E)-cinnamate + reduced [NADPH--hemoprotein reductase] + O2 = (E)-4-coumarate + oxidized [NADPH--hemoprotein reductase] + H2O + H(+). Its pathway is phenylpropanoid metabolism; trans-4-coumarate biosynthesis; trans-4-coumarate from trans-cinnamate: step 1/1. In terms of biological role, catalyzes the first oxidative step of the phenylpropanoid pathway in higher plants by transforming trans-cinnamate into p-coumarate. The compounds formed by this pathway are essential components for lignification, pollination, and defense against ultraviolet light, predators and pathogens. This Oryza sativa subsp. japonica (Rice) protein is Trans-cinnamate 4-monooxygenase.